The primary structure comprises 606 residues: Proline--tRNA ligase (606 aa).

The protein belongs to the class-II aminoacyl-tRNA synthetase family. ProS type 1 subfamily. As to quaternary structure, homodimer.

The protein localises to the cytoplasm. The enzyme catalyses tRNA(Pro) + L-proline + ATP = L-prolyl-tRNA(Pro) + AMP + diphosphate. Catalyzes the attachment of proline to tRNA(Pro) in a two-step reaction: proline is first activated by ATP to form Pro-AMP and then transferred to the acceptor end of tRNA(Pro). As ProRS can inadvertently accommodate and process non-cognate amino acids such as alanine and cysteine, to avoid such errors it has two additional distinct editing activities against alanine. One activity is designated as 'pretransfer' editing and involves the tRNA(Pro)-independent hydrolysis of activated Ala-AMP. The other activity is designated 'posttransfer' editing and involves deacylation of mischarged Ala-tRNA(Pro). The misacylated Cys-tRNA(Pro) is not edited by ProRS. The chain is Proline--tRNA ligase from Kocuria rhizophila (strain ATCC 9341 / DSM 348 / NBRC 103217 / DC2201).